Consider the following 466-residue polypeptide: MKPVALILVFLAISQARVLNLPKEAIDIPVAIVEDKEPPVALSLVKEEVKAEEVKPEEVKPIAQEEKAKDLKEEVKPEIKPEIKEQPKPDIKDEIKEDLKADIKEELKEKIEEQINELPNAKPLELKEKSLEAEEKPQEIKEEVQQPEIKKEATEIKEEPAQNILKSLPAEETVVVPAEELSPNPVEQEQSENQDAAHPQVRQATQATPTQQSTTQGNFVQQLIQNSPIGQFLNQFQPQPAAAAAPAAAQVQADDAAAAAPATPAPTVPGFLNPQAAITSAQQAVQNAAQSAVNATTQAFQGIQQFASNLGNQFQNTLSSLTGQQQQAVSTTPRPPGPIQQFVNNVFGGNNNATAAAPPAQQSGNPLQGIINFLGGNRPQNAPAAAPATQATEKPAVDDKIDPANDEVGEFVPESDNELRASGENIDDSFEDAGVPSNEVIVVNDDAGEEGNAVQNHPVATDAVAL.

The first 16 residues, 1 to 16, serve as a signal peptide directing secretion; that stretch reads MKPVALILVFLAISQA. One copy of the 1; approximate repeat lies at 48–50; that stretch reads EVK. A 16 X repeats region spans residues 48–157; the sequence is EVKAEEVKPE…EIKKEATEIK (110 aa). One copy of the 2; approximate repeat lies at 53-55; it reads EVK. The interval 55–94 is disordered; sequence KPEEVKPIAQEEKAKDLKEEVKPEIKPEIKEQPKPDIKDE. A 3; approximate repeat occupies 58-60; that stretch reads EVK. The 4; approximate repeat unit spans residues 70–72; the sequence is DLK. One copy of the 5; approximate repeat lies at 74 to 76; that stretch reads EVK. Residues 78-80 form a 6; approximate repeat; that stretch reads EIK. A 7; approximate repeat occupies 82-84; that stretch reads EIK. The stretch at 90–92 is one 8; approximate repeat; it reads DIK. Residues 94 to 96 form a 9; approximate repeat; that stretch reads EIK. The stretch at 98–100 is one 10; approximate repeat; the sequence is DLK. An 11; approximate repeat occupies 102-104; sequence DIK. The stretch at 106 to 108 is one 12; approximate repeat; sequence ELK. The disordered stretch occupies residues 119-220; it reads PNAKPLELKE…QQSTTQGNFV (102 aa). Residues 124 to 160 are compositionally biased toward basic and acidic residues; it reads LELKEKSLEAEEKPQEIKEEVQQPEIKKEATEIKEEP. The 13; approximate repeat unit spans residues 125–127; the sequence is ELK. Residues 139 to 141 form a 14; approximate repeat; it reads EIK. Residues 148 to 150 form a 15; approximate repeat; the sequence is EIK. One copy of the 16; approximate repeat lies at 155 to 157; the sequence is EIK. Positions 170-180 are enriched in low complexity; that stretch reads AEETVVVPAEE. A compositionally biased stretch (polar residues) spans 185–194; it reads PVEQEQSENQ. Residues 203–216 show a composition bias toward low complexity; that stretch reads QATQATPTQQSTTQ. 2 N-linked (GlcNAc...) asparagine glycosylation sites follow: Asn-294 and Asn-352. The disordered stretch occupies residues 378 to 435; it reads RPQNAPAAAPATQATEKPAVDDKIDPANDEVGEFVPESDNELRASGENIDDSFEDAGV. The segment covering 379–394 has biased composition (low complexity); it reads PQNAPAAAPATQATEK. A compositionally biased stretch (acidic residues) spans 404–416; the sequence is ANDEVGEFVPESD.

Its subcellular location is the secreted. Its function is as follows. Probably has an essential role in embryogenesis, induces morphogenesis of imaginal disks, and may participate in multimolecular aggregates. This is 20-hydroxyecdysone protein (ImpE2) from Drosophila melanogaster (Fruit fly).